The sequence spans 497 residues: 4,4'-diaponeurosporene oxygenase (497 aa).

7-19 (VIGGGLGGISAAI) contributes to the FAD binding site.

The protein belongs to the carotenoid/retinoid oxidoreductase family. CrtP subfamily. Requires FAD as cofactor.

It carries out the reaction all-trans-4,4'-diaponeurosporene + 2 AH2 + 2 O2 = 4,4'-diaponeurosporenal + 2 A + 3 H2O. Its pathway is carotenoid biosynthesis; staphyloxanthin biosynthesis; staphyloxanthin from farnesyl diphosphate: step 3/5. Its function is as follows. Involved in the biosynthesis of the yellow-orange carotenoid staphyloxanthin, which plays a role in the virulence via its protective function against oxidative stress. Catalyzes the oxidation of the terminal methyl side group of 4,4'-diaponeurosporene to form 4,4'-diaponeurosporen-4-al. The sequence is that of 4,4'-diaponeurosporene oxygenase from Staphylococcus aureus (strain MRSA252).